The chain runs to 285 residues: Undecaprenyl-diphosphatase (285 aa).

Transmembrane regions (helical) follow at residues 40 to 60 (DELLINAASNAGTLLAMLLYF), 92 to 112 (LCILVATPFALAGAVIYENFI), 122 to 142 (SVYAVAASTIVFGALLWWADA), 159 to 179 (FLIGASQLVAVIIPGTSRSGI), 197 to 217 (FSMLIGAPILAAVSLYGLLGL), 233 to 253 (LIVAALAFVSGYASIGLLMAL), and 259 to 279 (FLPFVLYRFALGIALLATSPI).

It belongs to the UppP family.

It localises to the cell inner membrane. The catalysed reaction is di-trans,octa-cis-undecaprenyl diphosphate + H2O = di-trans,octa-cis-undecaprenyl phosphate + phosphate + H(+). Functionally, catalyzes the dephosphorylation of undecaprenyl diphosphate (UPP). Confers resistance to bacitracin. The protein is Undecaprenyl-diphosphatase of Hyphomonas neptunium (strain ATCC 15444).